The chain runs to 102 residues: Small ribosomal subunit protein uS10 (102 aa).

It belongs to the universal ribosomal protein uS10 family. As to quaternary structure, part of the 30S ribosomal subunit.

Its function is as follows. Involved in the binding of tRNA to the ribosomes. The chain is Small ribosomal subunit protein uS10 from Desulfitobacterium hafniense (strain DSM 10664 / DCB-2).